Here is a 323-residue protein sequence, read N- to C-terminus: Aspartate carbamoyltransferase catalytic subunit (323 aa).

2 residues coordinate carbamoyl phosphate: R71 and T72. K99 lines the L-aspartate pocket. R121, H151, and Q154 together coordinate carbamoyl phosphate. R184 and R239 together coordinate L-aspartate. Carbamoyl phosphate-binding residues include G280 and P281.

It belongs to the aspartate/ornithine carbamoyltransferase superfamily. ATCase family. Heterododecamer (2C3:3R2) of six catalytic PyrB chains organized as two trimers (C3), and six regulatory PyrI chains organized as three dimers (R2).

It carries out the reaction carbamoyl phosphate + L-aspartate = N-carbamoyl-L-aspartate + phosphate + H(+). It participates in pyrimidine metabolism; UMP biosynthesis via de novo pathway; (S)-dihydroorotate from bicarbonate: step 2/3. Functionally, catalyzes the condensation of carbamoyl phosphate and aspartate to form carbamoyl aspartate and inorganic phosphate, the committed step in the de novo pyrimidine nucleotide biosynthesis pathway. In Ralstonia pickettii (strain 12J), this protein is Aspartate carbamoyltransferase catalytic subunit.